A 126-amino-acid polypeptide reads, in one-letter code: Large ribosomal subunit protein bL12 (126 aa).

It belongs to the bacterial ribosomal protein bL12 family. In terms of assembly, homodimer. Part of the ribosomal stalk of the 50S ribosomal subunit. Forms a multimeric L10(L12)X complex, where L10 forms an elongated spine to which 2 to 4 L12 dimers bind in a sequential fashion. Binds GTP-bound translation factors.

In terms of biological role, forms part of the ribosomal stalk which helps the ribosome interact with GTP-bound translation factors. Is thus essential for accurate translation. This is Large ribosomal subunit protein bL12 from Blochmanniella floridana.